Here is a 360-residue protein sequence, read N- to C-terminus: MKDSIKQKLENLVERYDEVGALLGDPDIIADQKKFRDLGKEYSELEPVVICYQEYRTVIENIAEAKMLMNDGDADMREMAQEELKTAEAQLEPLETQLQKLLLPKDPNDEKNVFLEIRAGTGGDEAAIFSGDLFRMYSRYAERAGWRIEIISENAGEHGGYKELITRVVGQGVYSQLKFESGAHRVQRVPETESQGRIHTSACTVAIMPEADESEEVELNKGDLRIDTFRASGAGGQHVNKTDSAIRITHIPTGIVVECQDERSQHKNRAKAMSLLAARINSAQAEQFAAEQASERKSLVGSGDRSERIRTYNYPQGRVTDHRINLTLYKLDEIMEGSLDEVIQPLVNEHQADQLAALAN.

Gln237 is modified (N5-methylglutamine).

The protein belongs to the prokaryotic/mitochondrial release factor family. In terms of processing, methylated by PrmC. Methylation increases the termination efficiency of RF1.

It localises to the cytoplasm. In terms of biological role, peptide chain release factor 1 directs the termination of translation in response to the peptide chain termination codons UAG and UAA. The chain is Peptide chain release factor 1 from Teredinibacter turnerae (strain ATCC 39867 / T7901).